Reading from the N-terminus, the 493-residue chain is Lysine--tRNA ligase (493 aa).

Mg(2+) is bound by residues glutamate 403 and glutamate 410.

The protein belongs to the class-II aminoacyl-tRNA synthetase family. In terms of assembly, homodimer. The cofactor is Mg(2+).

It localises to the cytoplasm. The catalysed reaction is tRNA(Lys) + L-lysine + ATP = L-lysyl-tRNA(Lys) + AMP + diphosphate. The polypeptide is Lysine--tRNA ligase (Wigglesworthia glossinidia brevipalpis).